The following is a 396-amino-acid chain: Tryptophan synthase beta chain (396 aa).

The residue at position 88 (Lys88) is an N6-(pyridoxal phosphate)lysine.

This sequence belongs to the TrpB family. In terms of assembly, tetramer of two alpha and two beta chains. The cofactor is pyridoxal 5'-phosphate.

It catalyses the reaction (1S,2R)-1-C-(indol-3-yl)glycerol 3-phosphate + L-serine = D-glyceraldehyde 3-phosphate + L-tryptophan + H2O. The protein operates within amino-acid biosynthesis; L-tryptophan biosynthesis; L-tryptophan from chorismate: step 5/5. Its function is as follows. The beta subunit is responsible for the synthesis of L-tryptophan from indole and L-serine. This Shewanella baltica (strain OS155 / ATCC BAA-1091) protein is Tryptophan synthase beta chain.